The primary structure comprises 100 residues: Osteocalcin (100 aa).

Residues 1–23 (MRALTLLALLALAALCIAGQAGA) form the signal peptide. The propeptide occupies 24–51 (KPSGAESSKGAAFVSKQEGSEVVKRPRR). Residues 52–98 (YLYQWLGAPVPYPDTLEPRREVCELNPDCDELADHIGFQEAYRRFYG) enclose the Gla domain. 4 residues coordinate Ca(2+): Glu68, Glu72, Glu75, and Asp81. Residues Glu68, Glu72, and Glu75 each carry the 4-carboxyglutamate modification. Cys74 and Cys80 are oxidised to a cystine.

Belongs to the osteocalcin/matrix Gla protein family. Gamma-carboxyglutamate residues are formed by vitamin K dependent carboxylation by GGCX. These residues are essential for the binding of calcium. Decarboxylation promotes the hormone activity.

The protein resides in the secreted. In terms of biological role, the carboxylated form is one of the main organic components of the bone matrix, which constitutes 1-2% of the total bone protein: it acts as a negative regulator of bone formation and is required to limit bone formation without impairing bone resorption or mineralization. The carboxylated form binds strongly to apatite and calcium. The uncarboxylated form acts as a hormone secreted by osteoblasts, which regulates different cellular processes, such as energy metabolism, male fertility and brain development. Regulates of energy metabolism by acting as a hormone favoring pancreatic beta-cell proliferation, insulin secretion and sensitivity and energy expenditure. Uncarboxylated osteocalcin hormone also promotes testosterone production in the testes: acts as a ligand for G protein-coupled receptor GPRC6A at the surface of Leydig cells, initiating a signaling response that promotes the expression of enzymes required for testosterone synthesis in a CREB-dependent manner. Also acts as a regulator of brain development: osteocalcin hormone crosses the blood-brain barrier and acts as a ligand for GPR158 on neurons, initiating a signaling response that prevents neuronal apoptosis in the hippocampus, favors the synthesis of all monoamine neurotransmitters and inhibits that of gamma-aminobutyric acid (GABA). Osteocalcin also crosses the placenta during pregnancy and maternal osteocalcin is required for fetal brain development. The sequence is that of Osteocalcin from Pan troglodytes (Chimpanzee).